The primary structure comprises 312 residues: MKVAVIGAAGGIGQALALLLKNGLPAGSDLALYDIAPVTPGVAADLSHIPTPVSIKGYGGVDPTPALEGADVVLISAGVARKPGMDRSDLFNVNAGIIKSLAEKIAVVCPKACVGIITNPVNTTVAIAADVLKKAGVYDKRRLFGITTLDIIRSETFVAELKGKTPSDIQVPVIGGHSGVTILPLLSQVEGVEFSDEEIKALTPRIQNAGTEVVEAKAGGGSATLSMGQAAYRFGLSLVRALQGEQGIVECAYVEGDGKHARFFAQPVLLGKDGVEEVIDYGKLSTFEQEALNNMLDTLTSDITLGEEFAAK.

Residues 7–13 and aspartate 34 each bind NAD(+); that span reads GAAGGIG. Substrate is bound by residues arginine 81 and arginine 87. NAD(+) contacts are provided by residues asparagine 94 and 117-119; that span reads ITN. Substrate is bound by residues asparagine 119 and arginine 153. Residue histidine 177 is the Proton acceptor of the active site. Methionine 227 lines the NAD(+) pocket.

Belongs to the LDH/MDH superfamily. MDH type 1 family. In terms of assembly, homodimer.

The enzyme catalyses (S)-malate + NAD(+) = oxaloacetate + NADH + H(+). In terms of biological role, catalyzes the reversible oxidation of malate to oxaloacetate. The polypeptide is Malate dehydrogenase (Photobacterium profundum (strain SS9)).